Reading from the N-terminus, the 497-residue chain is Cytochrome P450 monooxygenase cicH (497 aa).

The helical transmembrane segment at 2–19 threads the bilayer; it reads AILVRLFFALFVVSVYFF. A heme-binding site is contributed by Cys-439. N-linked (GlcNAc...) asparagine glycosylation occurs at Asn-443.

Belongs to the cytochrome P450 family. Heme is required as a cofactor.

The protein resides in the membrane. It functions in the pathway phytotoxin biosynthesis. Functionally, cytochrome P450 monooxygenase; part of the gene cluster that mediates the biosynthesis of cichorine, a phytotoxin active against knapweed, corn, and soybeans. The first step in the pathway is performed by the non-reducing polyketide synthase pkbA that condenses one acetyl-CoA starter unit with 3 malonyl-CoA units. PkbA also catalyzes one methylation step to produce 3-methylorsellinate. The nonribosomal peptide synthase-like protein cicB, the cytochrome P450 monooxygenase cicH and the O-methyltransferase cicE are involved in the conversion of 3-methylorsellinate into nidulol. CicB converts 3-methylorsellinate to a yet unidentified intermediate, cicH may play a ring-closing role for cichorine and cicE is plausibly responsible for the methylation of one of the phenol groups. The oxidoreductase cicC acts downstream with still unidentified enzymes to further convert nidulol into cichorine. This Emericella nidulans (strain FGSC A4 / ATCC 38163 / CBS 112.46 / NRRL 194 / M139) (Aspergillus nidulans) protein is Cytochrome P450 monooxygenase cicH.